The chain runs to 189 residues: UPF0149 protein VF_2102 (189 aa).

Belongs to the UPF0149 family.

In Aliivibrio fischeri (strain ATCC 700601 / ES114) (Vibrio fischeri), this protein is UPF0149 protein VF_2102.